Consider the following 307-residue polypeptide: Protoheme IX farnesyltransferase (307 aa).

Helical transmembrane passes span 24 to 44, 52 to 72, 115 to 135, 152 to 172, 179 to 199, 224 to 244, 245 to 265, and 284 to 304; these read ISLL…VGLV, PVIA…AGAL, VVLG…TIFF, IVIG…AASG, VILV…LSLY, QILL…MLGE, AGLA…LLAV, and FGFS…EALV.

It belongs to the UbiA prenyltransferase family. Protoheme IX farnesyltransferase subfamily.

Its subcellular location is the cell inner membrane. It catalyses the reaction heme b + (2E,6E)-farnesyl diphosphate + H2O = Fe(II)-heme o + diphosphate. It functions in the pathway porphyrin-containing compound metabolism; heme O biosynthesis; heme O from protoheme: step 1/1. Converts heme B (protoheme IX) to heme O by substitution of the vinyl group on carbon 2 of heme B porphyrin ring with a hydroxyethyl farnesyl side group. In Azorhizobium caulinodans (strain ATCC 43989 / DSM 5975 / JCM 20966 / LMG 6465 / NBRC 14845 / NCIMB 13405 / ORS 571), this protein is Protoheme IX farnesyltransferase.